Reading from the N-terminus, the 439-residue chain is Probable guanine deaminase (439 aa).

Zn(2+) contacts are provided by histidine 76 and histidine 78. Substrate is bound by residues 78–81 (HYPQ), 203–204 (RF), 231–234 (HINE), and aspartate 321. Positions 231 and 321 each coordinate Zn(2+).

Belongs to the metallo-dependent hydrolases superfamily. ATZ/TRZ family. Zn(2+) is required as a cofactor.

It carries out the reaction guanine + H2O + H(+) = xanthine + NH4(+). Its pathway is purine metabolism; guanine degradation; xanthine from guanine: step 1/1. Its function is as follows. Catalyzes the hydrolytic deamination of guanine, producing xanthine and ammonia. In Deinococcus radiodurans (strain ATCC 13939 / DSM 20539 / JCM 16871 / CCUG 27074 / LMG 4051 / NBRC 15346 / NCIMB 9279 / VKM B-1422 / R1), this protein is Probable guanine deaminase (guaD).